The sequence spans 415 residues: Levansucrase (415 aa).

Sucrose-binding residues include W45, D46, A132, R202, and D203. D46 functions as the Nucleophile in the catalytic mechanism. E287 acts as the Proton donor/acceptor in catalysis.

It belongs to the glycosyl hydrolase 68 family.

It localises to the secreted. It carries out the reaction [6)-beta-D-fructofuranosyl-(2-&gt;](n) alpha-D-glucopyranoside + sucrose = [6)-beta-D-fructofuranosyl-(2-&gt;](n+1) alpha-D-glucopyranoside + D-glucose. Functionally, catalyzes the synthesis of levan, a fructose polymer, by transferring the fructosyl moiety from sucrose to a growing acceptor molecule. This chain is Levansucrase, found in Erwinia amylovora (Fire blight bacteria).